A 427-amino-acid polypeptide reads, in one-letter code: Glucose-6-phosphate isomerase (427 aa).

Glutamate 277 acts as the Proton donor in catalysis. Active-site residues include histidine 298 and lysine 414.

It belongs to the GPI family.

It localises to the cytoplasm. It carries out the reaction alpha-D-glucose 6-phosphate = beta-D-fructose 6-phosphate. Its pathway is carbohydrate biosynthesis; gluconeogenesis. It functions in the pathway carbohydrate degradation; glycolysis; D-glyceraldehyde 3-phosphate and glycerone phosphate from D-glucose: step 2/4. Functionally, catalyzes the reversible isomerization of glucose-6-phosphate to fructose-6-phosphate. The chain is Glucose-6-phosphate isomerase from Mycoplasma capricolum subsp. capricolum (strain California kid / ATCC 27343 / NCTC 10154).